A 254-amino-acid polypeptide reads, in one-letter code: Ankyrin repeat domain-containing protein 7 (254 aa).

ANK repeat units follow at residues 58–87 (KYRT…KINV), 91–120 (ENKS…DPDL), 124–153 (RYNT…DLEA), 157–186 (DGYT…DVNA), and 190–219 (YQRT…ELCY).

Testis specific.

The sequence is that of Ankyrin repeat domain-containing protein 7 (ANKRD7) from Homo sapiens (Human).